A 195-amino-acid polypeptide reads, in one-letter code: Imidazoleglycerol-phosphate dehydratase (195 aa).

This sequence belongs to the imidazoleglycerol-phosphate dehydratase family.

It localises to the cytoplasm. The catalysed reaction is D-erythro-1-(imidazol-4-yl)glycerol 3-phosphate = 3-(imidazol-4-yl)-2-oxopropyl phosphate + H2O. It functions in the pathway amino-acid biosynthesis; L-histidine biosynthesis; L-histidine from 5-phospho-alpha-D-ribose 1-diphosphate: step 6/9. In Methylobacterium radiotolerans (strain ATCC 27329 / DSM 1819 / JCM 2831 / NBRC 15690 / NCIMB 10815 / 0-1), this protein is Imidazoleglycerol-phosphate dehydratase.